The primary structure comprises 487 residues: Serine/threonine-protein kinase 4 (487 aa).

The residue at position 1 (M1) is an N-acetylmethionine. At T3 the chain carries Phosphothreonine. Positions 30-281 (FDVLEKLGEG…ATQLLQHPFV (252 aa)) constitute a Protein kinase domain. ATP is bound by residues 36-44 (LGEGSYGSV) and K59. The active-site Proton acceptor is the D149. T183 carries the post-translational modification Phosphothreonine; by autocatalysis. Phosphoserine is present on S265. Residues 290 to 310 (LRDLINEAMDVKLKRQEAQQR) are a coiled coil. The segment at 305 to 338 (QEAQQREVDQDDEENSEEDELDSGTMVRAVGDDM) is disordered. The span at 313-326 (DQDDEENSEEDELD) shows a compositional bias: acidic residues. Residue S320 is modified to Phosphoserine. A phosphothreonine mark is found at T340 and T367. T387 is modified (phosphothreonine; by PKB/AKT1). A phosphoserine mark is found at S410 and S414. Phosphotyrosine is present on Y433. The SARAH domain occupies 433 to 480 (YEFLKSWTVEDLQKRLLALDPMMEQEIEEIRQKYQSKRQPILDAIEAK).

The protein belongs to the protein kinase superfamily. STE Ser/Thr protein kinase family. STE20 subfamily. Homodimer; mediated via the coiled-coil region. Interacts with NORE1, which inhibits autoactivation. Interacts with and stabilizes SAV1. Interacts with RASSF1. Interacts with FOXO3. Interacts with RASSF2 (via SARAH domain). Interacts with AR, PKB/AKT1, TNNI3 and SIRT1. Interacts with DLG5 (via PDZ domain 3). Interacts with MARK3 and SCRIB in the presence of DLG5. The cofactor is Mg(2+). Post-translationally, autophosphorylated on serine and threonine residues. Phosphorylation at Thr-387 by PKB/AKT1, leads to inhibition of its: kinase activity, nuclear translocation and autophosphorylation at Thr-183. It also diminishes its cleavage by caspases and its ability to phosphorylate FOXO3. Proteolytically cleaved by caspase-3 during apoptosis at Asp-326 and Asp-349 resulting in a 37 kDa or a 39 kDa subunit respectively. The 39 kDa subunit is further cleaved into the 37 kDa form. Proteolytic cleavage results in kinase activation and nuclear translocation of the truncated form (MST1/N). It is less likely that cleavage at Asp-349 is a prerequisite for activation as this site is not conserved in the murine ortholog.

The protein localises to the cytoplasm. Its subcellular location is the nucleus. It carries out the reaction L-seryl-[protein] + ATP = O-phospho-L-seryl-[protein] + ADP + H(+). The catalysed reaction is L-threonyl-[protein] + ATP = O-phospho-L-threonyl-[protein] + ADP + H(+). Its activity is regulated as follows. Inhibited by the C-terminal non-catalytic region. Activated by caspase-cleavage. Full activation also requires homodimerization and autophosphorylation of Thr-183. Activated by RASSF1 which acts by preventing its dephosphorylation. Its function is as follows. Stress-activated, pro-apoptotic kinase which, following caspase-cleavage, enters the nucleus and induces chromatin condensation followed by internucleosomal DNA fragmentation. Key component of the Hippo signaling pathway which plays a pivotal role in organ size control and tumor suppression by restricting proliferation and promoting apoptosis. The core of this pathway is composed of a kinase cascade wherein STK3/MST2 and STK4/MST1, in complex with its regulatory protein SAV1, phosphorylates and activates LATS1/2 in complex with its regulatory protein MOB1, which in turn phosphorylates and inactivates YAP1 oncoprotein and WWTR1/TAZ. Phosphorylation of YAP1 by LATS2 inhibits its translocation into the nucleus to regulate cellular genes important for cell proliferation, cell death, and cell migration. STK3/MST2 and STK4/MST1 are required to repress proliferation of mature hepatocytes, to prevent activation of facultative adult liver stem cells (oval cells), and to inhibit tumor formation. Phosphorylates 'Ser-14' of histone H2B (H2BS14ph) during apoptosis. Phosphorylates FOXO3 upon oxidative stress, which results in its nuclear translocation and cell death initiation. Phosphorylates MOBKL1A, MOBKL1B and RASSF2. Phosphorylates TNNI3 (cardiac Tn-I) and alters its binding affinity to TNNC1 (cardiac Tn-C) and TNNT2 (cardiac Tn-T). Phosphorylates FOXO1 on 'Ser-212' and regulates its activation and stimulates transcription of PMAIP1 in a FOXO1-dependent manner. Phosphorylates SIRT1 and inhibits SIRT1-mediated p53/TP53 deacetylation, thereby promoting p53/TP53 dependent transcription and apoptosis upon DNA damage. Acts as an inhibitor of PKB/AKT1. Phosphorylates AR on 'Ser-650' and suppresses its activity by intersecting with PKB/AKT1 signaling and antagonizing formation of AR-chromatin complexes. This is Serine/threonine-protein kinase 4 (STK4) from Lemur catta (Ring-tailed lemur).